A 555-amino-acid chain; its full sequence is Poly(A) polymerase PAPa (555 aa).

The segment at 1-20 (MNNQAYGVTPPISVANSTPK) is disordered. Residues 86-88 (FGS), 99-101 (DID), Asp-153, Lys-214, Tyr-223, and 232-233 (GV) each bind ATP. The Mg(2+) site is built by Asp-99, Asp-101, and Asp-153. A disordered region spans residues 532-555 (KRKRAVSKNEGKKKPKSVGTVSAA).

Belongs to the poly(A) polymerase family. The cofactor is Mg(2+). It depends on Mn(2+) as a cofactor.

Its subcellular location is the nucleus. The enzyme catalyses RNA(n) + ATP = RNA(n)-3'-adenine ribonucleotide + diphosphate. Polymerase that creates the 3'-poly(A) tail of mRNA's. May acquire specificity through interaction with a cleavage and polyadenylation factor. This Candida albicans (strain SC5314 / ATCC MYA-2876) (Yeast) protein is Poly(A) polymerase PAPa (PAPA).